We begin with the raw amino-acid sequence, 150 residues long: Sulfur-rich protein, serovar D (150 aa).

The next 2 helical transmembrane spans lie at 41 to 61 (VGLV…LVSA) and 67 to 87 (AIYL…VGIL).

The protein resides in the membrane. This Chlamydia trachomatis serovar D (strain ATCC VR-885 / DSM 19411 / UW-3/Cx) protein is Sulfur-rich protein, serovar D (srp).